Reading from the N-terminus, the 215-residue chain is Protein GET1 (215 aa).

Residues 1 to 4 (MINL) lie on the Lumenal side of the membrane. A helical membrane pass occupies residues 5-24 (ALVIFLCTLLNQIVSWVGKS). The Cytoplasmic portion of the chain corresponds to 25-108 (VLQEIAFTAY…SFSKKFSTLL (84 aa)). Residues 73–94 (AKLRRKLDKGLADLEKTNNTLS) are a coiled coil. Residues 109-129 (WLMTTGAQFLLSWWFRKQPIF) form a helical membrane-spanning segment. Over 130 to 153 (WLPEGWVPYPVAWLLSFPSAPIGS) the chain is Lumenal. The chain crosses the membrane as a helical span at residues 154–170 (VSSGAWGAICRRVLSTL). At 171–215 (QEIIQSLLAPSPAATGPVPTGPSSAKNDQPEAKIEALALEHEKLD) the chain is on the cytoplasmic side. The disordered stretch occupies residues 182-202 (PAATGPVPTGPSSAKNDQPEA).

Belongs to the WRB/GET1 family. Interacts with GET3.

It localises to the endoplasmic reticulum membrane. In terms of biological role, required for the post-translational delivery of tail-anchored (TA) proteins to the endoplasmic reticulum. Acts as a membrane receptor for soluble GET3, which recognizes and selectively binds the transmembrane domain of TA proteins in the cytosol. This Cryptococcus neoformans var. neoformans serotype D (strain JEC21 / ATCC MYA-565) (Filobasidiella neoformans) protein is Protein GET1.